The primary structure comprises 461 residues: Fumarate hydratase class II (461 aa).

Residues 97-99 (SGT), Arg125, 128-131 (HPND), 138-140 (SSN), and Thr186 contribute to the substrate site. Catalysis depends on His187, which acts as the Proton donor/acceptor. Ser317 is an active-site residue. Substrate-binding positions include Ser318 and 323 to 325 (KVN).

It belongs to the class-II fumarase/aspartase family. Fumarase subfamily. Homotetramer.

Its subcellular location is the cytoplasm. The enzyme catalyses (S)-malate = fumarate + H2O. Its pathway is carbohydrate metabolism; tricarboxylic acid cycle; (S)-malate from fumarate: step 1/1. In terms of biological role, involved in the TCA cycle. Catalyzes the stereospecific interconversion of fumarate to L-malate. This is Fumarate hydratase class II from Ralstonia nicotianae (strain ATCC BAA-1114 / GMI1000) (Ralstonia solanacearum).